Reading from the N-terminus, the 302-residue chain is Homoserine O-acetyltransferase (302 aa).

Cysteine 142 (acyl-thioester intermediate) is an active-site residue. Substrate is bound by residues lysine 163 and serine 192. Histidine 235 serves as the catalytic Proton acceptor. Residue glutamate 237 is part of the active site. Position 249 (arginine 249) interacts with substrate.

This sequence belongs to the MetA family.

The protein resides in the cytoplasm. The catalysed reaction is L-homoserine + acetyl-CoA = O-acetyl-L-homoserine + CoA. It functions in the pathway amino-acid biosynthesis; L-methionine biosynthesis via de novo pathway; O-acetyl-L-homoserine from L-homoserine: step 1/1. Functionally, transfers an acetyl group from acetyl-CoA to L-homoserine, forming acetyl-L-homoserine. This is Homoserine O-acetyltransferase from Geobacillus kaustophilus.